The sequence spans 502 residues: Tubulin gamma chain (502 aa).

Positions glutamate 51–proline 68 are enriched in polar residues. Residues glutamate 51–arginine 73 form a disordered region. Alanine 169 to glycine 175 contributes to the GTP binding site. The segment covering aspartate 473 to aspartate 482 has biased composition (acidic residues). Positions aspartate 473 to isoleucine 502 are disordered.

The protein belongs to the tubulin family.

It localises to the cytoplasm. Its subcellular location is the cytoskeleton. The protein resides in the microtubule organizing center. It is found in the spindle pole body. Its function is as follows. Tubulin is the major constituent of microtubules. The gamma chain is found at microtubule organizing centers (MTOC) such as the spindle poles or the centrosome, suggesting that it is involved in the minus-end nucleation of microtubule assembly. This Candida albicans (Yeast) protein is Tubulin gamma chain (TUB4).